A 277-amino-acid polypeptide reads, in one-letter code: Large ribosomal subunit protein uL2 (277 aa).

The disordered stretch occupies residues 222 to 277 (GVAMNPVDHPHGGGEGRTSGGRHPVTPWGKPTKGKKTRSNKATDKFIMRSRHQRKK).

The protein belongs to the universal ribosomal protein uL2 family. As to quaternary structure, part of the 50S ribosomal subunit. Forms a bridge to the 30S subunit in the 70S ribosome.

One of the primary rRNA binding proteins. Required for association of the 30S and 50S subunits to form the 70S ribosome, for tRNA binding and peptide bond formation. It has been suggested to have peptidyltransferase activity; this is somewhat controversial. Makes several contacts with the 16S rRNA in the 70S ribosome. The chain is Large ribosomal subunit protein uL2 from Brucella canis (strain ATCC 23365 / NCTC 10854 / RM-666).